Consider the following 227-residue polypeptide: Cytochrome c biogenesis ATP-binding export protein CcmA (227 aa).

The region spanning 26–227 (LAASGLGFSR…ARTLRLDARS (202 aa)) is the ABC transporter domain. 58–65 (GANGSGKT) provides a ligand contact to ATP.

This sequence belongs to the ABC transporter superfamily. CcmA exporter (TC 3.A.1.107) family. As to quaternary structure, the complex is composed of two ATP-binding proteins (CcmA) and two transmembrane proteins (CcmB).

The protein resides in the cell inner membrane. The enzyme catalyses heme b(in) + ATP + H2O = heme b(out) + ADP + phosphate + H(+). In terms of biological role, part of the ABC transporter complex CcmAB involved in the biogenesis of c-type cytochromes; once thought to export heme, this seems not to be the case, but its exact role is uncertain. Responsible for energy coupling to the transport system. This chain is Cytochrome c biogenesis ATP-binding export protein CcmA, found in Cupriavidus necator (strain ATCC 17699 / DSM 428 / KCTC 22496 / NCIMB 10442 / H16 / Stanier 337) (Ralstonia eutropha).